The following is a 161-amino-acid chain: Arachidonate 5-lipoxygenase-activating protein (161 aa).

The Lumenal portion of the chain corresponds to 1 to 8 (MDQEAVGN). Residues 9-30 (VVLLALVTLISVVQNAFFAHKV) form a helical membrane-spanning segment. Over 31–52 (EHESKAHNGRSFQRTGTLAFER) the chain is Cytoplasmic. Residues 53–77 (VYTANQNCVDAYPTFLVVLWTAGLL) traverse the membrane as a helical segment. Residues 78–80 (CSQ) are Lumenal-facing. A helical membrane pass occupies residues 81-102 (VPAAFAGLMYLFVRQKYFVGYL). Residues 103 to 107 (GERTQ) are Cytoplasmic-facing. An intramembrane segment occupies 108 to 115 (STPGYIFG). Residues 116-128 (KRIILFLFLMSFA) traverse the membrane as a helical segment. Residues 129–161 (GILNHYLIFFFGSDFENYIRTVSTTISPLLLIP) are Lumenal-facing.

It belongs to the MAPEG family. As to quaternary structure, homotrimer. Interacts with LTC4S and ALOX5.

It is found in the nucleus membrane. It localises to the endoplasmic reticulum membrane. Its function is as follows. Required for leukotriene biosynthesis by ALOX5 (5-lipoxygenase). Anchors ALOX5 to the membrane. Binds arachidonic acid, and could play an essential role in the transfer of arachidonic acid to ALOX5. Binds to MK-886, a compound that blocks the biosynthesis of leukotrienes. This is Arachidonate 5-lipoxygenase-activating protein (Alox5ap) from Mus musculus (Mouse).